Reading from the N-terminus, the 610-residue chain is C4b-binding protein alpha chain (610 aa).

The signal sequence occupies residues 1 to 48 (MKHQRVPVMILHSKGTMASWPFSRLWSISDPILFQVTLVATLLATVLG). Sushi domains lie at 49–109 (SCGI…FCVK), 110–171 (KRCE…QCII), 172–236 (AKCE…SCKK), 237–296 (VICV…TCEL), 297–364 (NGCL…ECKE), 365–427 (VCCP…ECRP), 428–485 (DCKS…QCKA), and 486–543 (LCLK…KCEW). 16 disulfides stabilise this stretch: Cys50-Cys95, Cys80-Cys107, Cys112-Cys153, Cys139-Cys169, Cys174-Cys217, Cys203-Cys234, Cys239-Cys281, Cys267-Cys294, Cys299-Cys350, Cys334-Cys362, Cys367-Cys412, Cys402-Cys425, Cys429-Cys471, Cys457-Cys483, Cys487-Cys528, and Cys514-Cys541. Asn66 is a glycosylation site (N-linked (GlcNAc...) asparagine). Residue Asn221 is glycosylated (N-linked (GlcNAc...) asparagine). Asn525 and Asn602 each carry an N-linked (GlcNAc...) asparagine glycan.

In terms of assembly, disulfide-linked complex of alpha and beta chains.

Its subcellular location is the secreted. Controls the classical pathway of complement activation. It binds as a cofactor to C3b/C4b inactivator (C3bINA), which then hydrolyzes the complement fragment C4b. It also accelerates the degradation of the C4bC2a complex (C3 convertase) by dissociating the complement fragment C2a. Alpha chain binds C4b. It also interacts with serum amyloid P component. The sequence is that of C4b-binding protein alpha chain (C4BPA) from Bos taurus (Bovine).